Reading from the N-terminus, the 255-residue chain is Ribonuclease PH (255 aa).

Residues Arg86 and 124-126 each bind phosphate; that span reads GTR.

This sequence belongs to the RNase PH family. In terms of assembly, homohexameric ring arranged as a trimer of dimers.

It catalyses the reaction tRNA(n+1) + phosphate = tRNA(n) + a ribonucleoside 5'-diphosphate. Its function is as follows. Phosphorolytic 3'-5' exoribonuclease that plays an important role in tRNA 3'-end maturation. Removes nucleotide residues following the 3'-CCA terminus of tRNAs; can also add nucleotides to the ends of RNA molecules by using nucleoside diphosphates as substrates, but this may not be physiologically important. Probably plays a role in initiation of 16S rRNA degradation (leading to ribosome degradation) during starvation. This chain is Ribonuclease PH, found in Geobacillus thermodenitrificans (strain NG80-2).